The following is a 70-amino-acid chain: ATP synthase subunit c (70 aa).

Transmembrane regions (helical) follow at residues 4–24 and 49–69; these read IAAAIAIGLGALGAGIGNGLI and GIALVEALPIIAVVIAFLAFF.

It belongs to the ATPase C chain family. As to quaternary structure, F-type ATPases have 2 components, F(1) - the catalytic core - and F(0) - the membrane proton channel. F(1) has five subunits: alpha(3), beta(3), gamma(1), delta(1), epsilon(1). F(0) has three main subunits: a(1), b(2) and c(10-14). The alpha and beta chains form an alternating ring which encloses part of the gamma chain. F(1) is attached to F(0) by a central stalk formed by the gamma and epsilon chains, while a peripheral stalk is formed by the delta and b chains. The F(1)F(0) complex interacts with SpoIIIJ and YqjG; YqgA is found in the same complex.

Its subcellular location is the cell membrane. Functionally, f(1)F(0) ATP synthase produces ATP from ADP in the presence of a proton or sodium gradient. F-type ATPases consist of two structural domains, F(1) containing the extramembraneous catalytic core and F(0) containing the membrane proton channel, linked together by a central stalk and a peripheral stalk. During catalysis, ATP synthesis in the catalytic domain of F(1) is coupled via a rotary mechanism of the central stalk subunits to proton translocation. In terms of biological role, key component of the F(0) channel; it plays a direct role in translocation across the membrane. A homomeric c-ring of between 10-14 subunits forms the central stalk rotor element with the F(1) delta and epsilon subunits. This is ATP synthase subunit c from Bacillus subtilis (strain 168).